We begin with the raw amino-acid sequence, 113 residues long: Large ribosomal subunit protein bL19 (113 aa).

This sequence belongs to the bacterial ribosomal protein bL19 family.

Functionally, this protein is located at the 30S-50S ribosomal subunit interface and may play a role in the structure and function of the aminoacyl-tRNA binding site. This is Large ribosomal subunit protein bL19 from Desulfitobacterium hafniense (strain DSM 10664 / DCB-2).